A 150-amino-acid polypeptide reads, in one-letter code: uncharacterized protein (150 aa).

This is an uncharacterized protein from Streptomyces lincolnensis.